Consider the following 260-residue polypeptide: MHTVTPIPAFNDNYIWLIHAKDSGGHYVVDPGDAKAVLDYLEQHQIVLDGILITHHHSDHTGGIAELQASHDHKLTVYGPDNENIKGINHPISGQTESVKPEKLDSDAAVFHLPGHTLGHIAYLIDDHLFCGDTLFSAGCGRLFEGTPAQMHHSLQTLAQLDETTLVYPAHEYTQANLAFALTVENDNEALIAHAAKVKQLRDQNLPSLPSSIGLEKQINPFLRPEQASIKQNLSCHFAQDVTDDGTSFTLLRQWKDNFL.

H55, H57, D59, H60, H116, D133, and H171 together coordinate Zn(2+).

The protein belongs to the metallo-beta-lactamase superfamily. Glyoxalase II family. Monomer. Zn(2+) serves as cofactor.

The enzyme catalyses an S-(2-hydroxyacyl)glutathione + H2O = a 2-hydroxy carboxylate + glutathione + H(+). It functions in the pathway secondary metabolite metabolism; methylglyoxal degradation; (R)-lactate from methylglyoxal: step 2/2. Functionally, thiolesterase that catalyzes the hydrolysis of S-D-lactoyl-glutathione to form glutathione and D-lactic acid. The chain is Hydroxyacylglutathione hydrolase from Shewanella loihica (strain ATCC BAA-1088 / PV-4).